Here is a 155-residue protein sequence, read N- to C-terminus: Late embryogenesis abundant protein 2 (155 aa).

The interval 1–155 (MTSHDQSYRA…DKDHFPTNRH (155 aa)) is disordered. Basic and acidic residues-rich tracts occupy residues 11–21 (GEAKGRTEEKT) and 28–39 (IEDKAQAAKEKA). A compositionally biased stretch (low complexity) spans 40–78 (QQAAQTAKDKTSQTAQAAKEKTQQTAQAAKDKTQQTTQA). 2 consecutive repeat copies span residues 53–63 (TAQAAKEKTQQ) and 64–74 (TAQAAKDKTQQ). A 2 X 11 AA approximate tandem repeats of T-A-Q-A-A-K-E-K-T-Q-Q region spans residues 53 to 74 (TAQAAKEKTQQTAQAAKDKTQQ). Positions 79 to 95 (TKEKAQDTTGRAKEKGS) are enriched in basic and acidic residues. A compositionally biased stretch (polar residues) spans 97–120 (MGQSTKETAQSGKDNSAGFLQQTG). Positions 144-155 (DQDKDHFPTNRH) are enriched in basic and acidic residues.

This sequence belongs to the LEA type 4 family. As to expression, highest expression is found in seeds. No expression detected in adult tissues.

This chain is Late embryogenesis abundant protein 2, found in Cicer arietinum (Chickpea).